Consider the following 298-residue polypeptide: HTH-type transcriptional regulator ArgP (298 aa).

The region spanning 4–60 (LDYKWIEALDAVVAQGGFERAAEELYISQSAVSQRIKQLERFLAQPVLIREQPPKPT) is the HTH lysR-type domain. The H-T-H motif DNA-binding region spans 21 to 40 (FERAAEELYISQSAVSQRIK).

The protein belongs to the LysR transcriptional regulatory family. As to quaternary structure, homodimer.

Controls the transcription of genes involved in arginine and lysine metabolism. The sequence is that of HTH-type transcriptional regulator ArgP from Vibrio vulnificus (strain CMCP6).